Here is a 388-residue protein sequence, read N- to C-terminus: MTNIIRQFLRQEAAGGIILIVAAIIALIMANTPAQGIYHAFLNLPVMVKVSSLEIAKPLLLWINDGLMAIFFLVVGLEVKRELMQGSLAGRDKAVFPAIAALGGMLAPALIYLMFNGADEVTRQGWAIPAATDIAFALGVMALLGNRVPTSLKVFLLALAIIDDLGVIVIIALFYTHEVSMAALGVAAASIAVLAFMNWRGVGKTSLYMIVGLVLWVAILKSGVHATLAGVIIGFMIPLNVKKGPSPSETLEHELHPWVAFLILPLFAFANAGVSLQGVSLSGLTSLLPVGIAAGLFIGKPLGIFTFSLLAVKLGIARLPEGIGFKQVFAVSVLCGIGFTMSIFIASLAFGDADVVLSTYSRLGILIGSTTAAVVGYGLLRMSLPRVR.

12 consecutive transmembrane segments (helical) span residues 13 to 33, 36 to 56, 59 to 79, 95 to 115, 125 to 145, 154 to 174, 179 to 199, 213 to 233, 259 to 279, 287 to 307, 328 to 348, and 363 to 383; these read AAGG…ANTP, GIYH…LEIA, LLLW…GLEV, VFPA…YLMF, GWAI…ALLG, VFLL…IALF, VSMA…FMNW, LVLW…GVII, VAFL…LQGV, LLPV…IFTF, VFAV…IASL, and LGIL…LRMS.

It belongs to the NhaA Na(+)/H(+) (TC 2.A.33) antiporter family.

Its subcellular location is the cell inner membrane. The enzyme catalyses Na(+)(in) + 2 H(+)(out) = Na(+)(out) + 2 H(+)(in). Functionally, na(+)/H(+) antiporter that extrudes sodium in exchange for external protons. The protein is Na(+)/H(+) antiporter NhaA of Serratia proteamaculans (strain 568).